Consider the following 923-residue polypeptide: Helicase POLQ-like (923 aa).

Residues 1-84 are disordered; sequence MNRTPIRRCK…STVTPIQQKI (84 aa). Low complexity predominate over residues 43 to 55; that stretch reads STSPQSPSSSTEN. The Helicase ATP-binding domain maps to 178–349; it reads DKRLLDGENC…ALRAFVYSTN (172 aa). 191–198 is an ATP binding site; sequence LPTGAGKT. The DEAH box signature appears at 295–298; it reads DELH. A Helicase C-terminal domain is found at 392 to 596; that stretch reads GICQLLAKLI…CVVLKLAENI (205 aa).

The protein belongs to the helicase family. SKI2 subfamily.

The protein resides in the nucleus. It localises to the chromosome. It catalyses the reaction Couples ATP hydrolysis with the unwinding of duplex DNA by translocating in the 3'-5' direction.. The catalysed reaction is ATP + H2O = ADP + phosphate + H(+). Functionally, single-stranded 3'-5' DNA helicase that plays a key role in homology-driven double-strand break (DSB) repair. Involved in different DSB repair mechanisms that are guided by annealing of extensive stretches of complementary bases at break ends, such as microhomology-mediated end-joining (MMEJ), single-strand annealing (SSA) or synthesis-dependent strand annealing (SDSA). The polypeptide is Helicase POLQ-like (Caenorhabditis elegans).